The chain runs to 499 residues: GTPase Der (499 aa).

2 consecutive EngA-type G domains span residues 3-166 and 211-384; these read PVVA…MDEV and IKLA…DCST. Residues 9–16, 56–60, 118–121, 217–224, 264–268, and 329–332 each bind GTP; these read GRPNVGKS, DTGGI, NKTD, DTAGV, and NKWD. A KH-like domain is found at 385 to 469; the sequence is RRVNTSMLTR…PIRIQFKEGD (85 aa).

It belongs to the TRAFAC class TrmE-Era-EngA-EngB-Septin-like GTPase superfamily. EngA (Der) GTPase family. As to quaternary structure, associates with the 50S ribosomal subunit.

Its function is as follows. GTPase that plays an essential role in the late steps of ribosome biogenesis. The polypeptide is GTPase Der (Erwinia tasmaniensis (strain DSM 17950 / CFBP 7177 / CIP 109463 / NCPPB 4357 / Et1/99)).